Consider the following 144-residue polypeptide: Actin-associated protein FAM107A (144 aa).

A coiled-coil region spans residues 70 to 90 (VLEHRRRNQLIKKKEEELEAK). Residues 74 to 84 (RRRNQLIKKKE) carry the Nuclear localization signal motif. Residues 104–123 (QQRLNQLENPPQRDEDHAPE) form a disordered region. A compositionally biased stretch (basic and acidic residues) spans 114-123 (PQRDEDHAPE).

In terms of assembly, interacts with ACTB. Interacts with F-actin. Interacts with PRDX1. Interacts with COMMD1; this interaction stabilizes COMMD1 in the nucleus. Interacts with MAP1A. In terms of tissue distribution, expressed in septum, the neocortex, the CA3 region of the hippocampus and the cerebellum (at protein level).

It is found in the nucleus. Its subcellular location is the cytoplasm. The protein localises to the cytoskeleton. It localises to the stress fiber. The protein resides in the cell junction. It is found in the focal adhesion. Its subcellular location is the cell projection. The protein localises to the ruffle membrane. It localises to the synapse. In terms of biological role, stress-inducible actin-binding protein that plays a role in synaptic and cognitive functions by modulating actin filamentous (F-actin) dynamics. Mediates polymerization of globular actin to F-actin. Also binds to, stabilizes and bundles F-actin. Involved in synaptic function by regulating neurite outgrowth in an actin-dependent manner and for the acquisition of hippocampus-dependent cognitive function, such as learning and long-term memory. Plays a role in the actin and microtubule cytoskeleton organization; negatively regulates focal adhesion (FA) assembly promoting malignant glial cell migration in an actin-, microtubule- and MAP1A-dependent manner. Also involved in neuroblastoma G1/S phase cell cycle progression and cell proliferation inhibition by stimulating ubiquitination of NF-kappa-B subunit RELA and NF-kappa-B degradation in a COMMD1- and actin-dependent manner. May play a role in tumor development. The sequence is that of Actin-associated protein FAM107A from Mus musculus (Mouse).